The primary structure comprises 152 residues: Protein Smg homolog (152 aa).

The protein belongs to the Smg family.

This is Protein Smg homolog from Bordetella bronchiseptica (strain ATCC BAA-588 / NCTC 13252 / RB50) (Alcaligenes bronchisepticus).